A 191-amino-acid polypeptide reads, in one-letter code: Large ribosomal subunit protein uL22 (191 aa).

Positions Val159–Gln168 are enriched in basic and acidic residues. A disordered region spans residues Val159–Asp191. Residues Lys169–Leu182 are compositionally biased toward basic residues.

Belongs to the universal ribosomal protein uL22 family.

This is Large ribosomal subunit protein uL22 (RPL17) from Suberites domuncula (Sponge).